Here is a 350-residue protein sequence, read N- to C-terminus: Glyceraldehyde-3-phosphate dehydrogenase (350 aa).

NAD(+) is bound by residues 13 to 14 and glycine 118; that span reads TI. 147–149 contributes to the D-glyceraldehyde 3-phosphate binding site; sequence SCN. The active-site Nucleophile is the cysteine 148. Arginine 176 contacts NAD(+). 202 to 203 lines the D-glyceraldehyde 3-phosphate pocket; it reads HG. Residue glutamine 309 participates in NAD(+) binding. The interval 327–350 is disordered; sequence LEEDPEASMDATDSALGVLNSPPL.

This sequence belongs to the glyceraldehyde-3-phosphate dehydrogenase family. In terms of assembly, homotetramer.

It localises to the cytoplasm. It catalyses the reaction D-glyceraldehyde 3-phosphate + phosphate + NADP(+) = (2R)-3-phospho-glyceroyl phosphate + NADPH + H(+). It carries out the reaction D-glyceraldehyde 3-phosphate + phosphate + NAD(+) = (2R)-3-phospho-glyceroyl phosphate + NADH + H(+). The protein operates within carbohydrate degradation; glycolysis; pyruvate from D-glyceraldehyde 3-phosphate: step 1/5. In Methanopyrus kandleri (strain AV19 / DSM 6324 / JCM 9639 / NBRC 100938), this protein is Glyceraldehyde-3-phosphate dehydrogenase.